The following is a 473-amino-acid chain: Kremen protein 1 (473 aa).

The N-terminal stretch at 1–19 (MAPPAARLALLSAAALTLA) is a signal peptide. Topologically, residues 21 to 392 (RPAPGPRPSP…ASGHRVEGWT (372 aa)) are extracellular. In terms of domain architecture, Kringle spans 31-114 (ECFTANGADY…YWKYCEIPAC (84 aa)). 8 disulfide bridges follow: cysteine 32-cysteine 114, cysteine 55-cysteine 95, cysteine 84-cysteine 109, cysteine 122-cysteine 186, cysteine 147-cysteine 167, cysteine 151-cysteine 169, cysteine 190-cysteine 198, and cysteine 214-cysteine 240. The N-linked (GlcNAc...) asparagine glycan is linked to asparagine 59. A WSC domain is found at 116-210 (MPGNLGCYKD…DGRIILFDTL (95 aa)). The CUB domain maps to 214-321 (CGGNYSSMAA…QGFAVLYQAT (108 aa)). N-linked (GlcNAc...) asparagine glycosylation is found at asparagine 217, asparagine 255, asparagine 293, asparagine 333, and asparagine 345. The helical transmembrane segment at 393–413 (VYGLATLLILTVTAVVAKILL) threads the bilayer. At 414-473 (HVTFKSHRVTASGDLRDCRQPGTSGEIWTIFYEPSTTISIFKKKLKGQSQQDDRNPLVSD) the chain is on the cytoplasmic side. Residues 414-473 (HVTFKSHRVTASGDLRDCRQPGTSGEIWTIFYEPSTTISIFKKKLKGQSQQDDRNPLVSD) are essential for apoptotic activity.

In terms of assembly, forms a ternary complex with DKK1 and LRP6. Interacts with LRP6 in a DKK1-dependent manner. Interacts with DKK1 and RSPO1 (via FU repeats).

Its subcellular location is the cell membrane. Functionally, receptor for Dickkopf proteins. Cooperates with DKK1/2 to inhibit Wnt/beta-catenin signaling by promoting the endocytosis of Wnt receptors LRP5 and LRP6. In the absence of DKK1, potentiates Wnt-beta-catenin signaling by maintaining LRP5 or LRP6 at the cell membrane. Can trigger apoptosis in a Wnt-independent manner and this apoptotic activity is inhibited upon binding of the ligand DKK1. Plays a role in limb development; attenuates Wnt signaling in the developing limb to allow normal limb patterning and can also negatively regulate bone formation. Modulates cell fate decisions in the developing cochlea with an inhibitory role in hair cell fate specification. The protein is Kremen protein 1 (Kremen1) of Rattus norvegicus (Rat).